The chain runs to 115 residues: Ribonuclease P protein component (115 aa).

This sequence belongs to the RnpA family. Consists of a catalytic RNA component (M1 or rnpB) and a protein subunit.

It carries out the reaction Endonucleolytic cleavage of RNA, removing 5'-extranucleotides from tRNA precursor.. Its function is as follows. RNaseP catalyzes the removal of the 5'-leader sequence from pre-tRNA to produce the mature 5'-terminus. It can also cleave other RNA substrates such as 4.5S RNA. The protein component plays an auxiliary but essential role in vivo by binding to the 5'-leader sequence and broadening the substrate specificity of the ribozyme. This chain is Ribonuclease P protein component, found in Bacillus cereus (strain B4264).